The following is a 651-amino-acid chain: Acetyl-coenzyme A synthetase (651 aa).

CoA-binding positions include 189–192 (RGGK), Thr-311, and Asn-335. ATP contacts are provided by residues 387-389 (GEP), 411-416 (DTWWQT), Asp-500, and Arg-515. Ser-523 is a CoA binding site. Residue Arg-526 coordinates ATP. Residues Val-537, His-539, and Val-542 each contribute to the Mg(2+) site. Residue Arg-584 participates in CoA binding. Lys-609 bears the N6-acetyllysine mark.

Belongs to the ATP-dependent AMP-binding enzyme family. Requires Mg(2+) as cofactor. Post-translationally, acetylated. Deacetylation by the SIR2-homolog deacetylase activates the enzyme.

It carries out the reaction acetate + ATP + CoA = acetyl-CoA + AMP + diphosphate. Its function is as follows. Catalyzes the conversion of acetate into acetyl-CoA (AcCoA), an essential intermediate at the junction of anabolic and catabolic pathways. AcsA undergoes a two-step reaction. In the first half reaction, AcsA combines acetate with ATP to form acetyl-adenylate (AcAMP) intermediate. In the second half reaction, it can then transfer the acetyl group from AcAMP to the sulfhydryl group of CoA, forming the product AcCoA. In Rhizobium etli (strain ATCC 51251 / DSM 11541 / JCM 21823 / NBRC 15573 / CFN 42), this protein is Acetyl-coenzyme A synthetase.